Reading from the N-terminus, the 209-residue chain is Streptogramin A acetyltransferase (209 aa).

Residue histidine 82 is part of the active site.

This sequence belongs to the transferase hexapeptide repeat family. In terms of assembly, homohexamer.

Its function is as follows. Inactivates the A compounds of streptogramin antibiotics by acetylation, thus providing resistance to these antibiotics. This Enterococcus faecium (Streptococcus faecium) protein is Streptogramin A acetyltransferase (vatD).